The following is a 402-amino-acid chain: NAD-dependent protein deacetylase sirtuin-7 (402 aa).

Residues 1–23 are disordered; the sequence is MAAGGGLSRSERKAAERVRRLRE. Residues 9 to 23 show a composition bias toward basic and acidic residues; sequence RSERKAAERVRRLRE. The Deacetylase sirtuin-type domain maps to 83 to 330; it reads PEELRRKVRE…QLLMNELGLE (248 aa). Residues 108–127 and 168–171 each bind NAD(+); these read GAGI…NGVW and QNCD. The active-site Proton acceptor is the H188. Zn(2+)-binding residues include C196, C199, C226, and C229. NAD(+)-binding positions include 269 to 271, 298 to 300, and C316; these read GSS and NLQ. The interval 355–402 is disordered; sequence SHSRKSLCRSREEAPPGDQSDPLASAPPILGGWFGRGCAKRAKRKKVA. Asymmetric dimethylarginine; alternate is present on R390. Omega-N-methylarginine; alternate is present on R390. A compositionally biased stretch (basic residues) spans 392–402; sequence CAKRAKRKKVA.

Belongs to the sirtuin family. Class IV subfamily. Interacts with UBTF and the RNA polymerase I complex. Interacts with components of the B-WICH complex, such as MYBBP1A, SMARCA5/SNF2H and BAZ1B/WSTF. Interacts with ELK4, leading to stabilization at target promoters for H3K18Ac deacetylation. Interacts with histone H2A and/or histone H2B. Interacts with DNMT1. Interacts with SIRT1. Zn(2+) serves as cofactor. In terms of processing, phosphorylated during mitosis. Methylation at Arg-390 by PRMT6 inhibits the H3K18Ac histone deacetylase activity, promoting mitochondria biogenesis and maintaining mitochondria respiration. Post-translationally, ubiquitinated via 'Lys-63'-linked ubiquitin chains. Deubiquitinated by USP7, inhibiting the H3K18Ac histone deacetylase activity and regulating gluconeogenesis. Ubiquitinated by E3 ubiquitin-protein ligase complex containing FBXO7; leading to proteasomal degradation. In terms of tissue distribution, detected in liver, spleen and testis. Detected in embryos.

Its subcellular location is the nucleus. The protein localises to the nucleolus. It is found in the nucleoplasm. The protein resides in the chromosome. It localises to the cytoplasm. The enzyme catalyses N(6)-acetyl-L-lysyl-[protein] + NAD(+) + H2O = 2''-O-acetyl-ADP-D-ribose + nicotinamide + L-lysyl-[protein]. The catalysed reaction is N(6)-glutaryl-L-lysyl-[protein] + NAD(+) + H2O = 2''-O-glutaryl-ADP-D-ribose + nicotinamide + L-lysyl-[protein]. It catalyses the reaction N(6)-succinyl-L-lysyl-[protein] + NAD(+) + H2O = 2''-O-succinyl-ADP-D-ribose + nicotinamide + L-lysyl-[protein]. It carries out the reaction N(6)-propanoyl-L-lysyl-[protein] + NAD(+) + H2O = 3''-O-propanoyl-ADP-D-ribose + nicotinamide + L-lysyl-[protein]. The enzyme catalyses N(6)-decanoyl-L-lysyl-[protein] + NAD(+) + H2O = 2''-O-decanoyl-ADP-D-ribose + nicotinamide + L-lysyl-[protein]. Its activity is regulated as follows. NAD-dependent protein-lysine deacetylase and deacylase activities are activated by nucleic acids. Histone deacetylase activity is activated by DNA. Protein-lysine deacylase activity is activated by RNA. H3K18Ac histone deacetylase activity is inhibited by methylation at Arg-390. H3K18Ac histone deacetylase activity is inhibited by deubiquitination by USP7. In terms of biological role, NAD-dependent protein-lysine deacylase that can act both as a deacetylase or deacylase (desuccinylase, depropionylase and deglutarylase), depending on the context. Also acts as a dedecanoylase. Specifically mediates deacetylation of histone H3 at 'Lys-18' (H3K18Ac). In contrast to other histone deacetylases, displays strong preference for a specific histone mark, H3K18Ac, directly linked to control of gene expression. H3K18Ac is mainly present around the transcription start site of genes and has been linked to activation of nuclear hormone receptors; SIRT7 thereby acts as a transcription repressor. Moreover, H3K18 hypoacetylation has been reported as a marker of malignancy in various cancers and seems to maintain the transformed phenotype of cancer cells. Also able to mediate deacetylation of histone H3 at 'Lys-36' (H3K36Ac) in the context of nucleosomes. Also mediates deacetylation of non-histone proteins, such as ATM, CDK9, DDX21, DDB1, FBL, FKBP5/FKBP51, GABPB1, RAN, RRP9/U3-55K and POLR1E/PAF53. Enriched in nucleolus where it stimulates transcription activity of the RNA polymerase I complex. Acts by mediating the deacetylation of the RNA polymerase I subunit POLR1E/PAF53, thereby promoting the association of RNA polymerase I with the rDNA promoter region and coding region. In response to metabolic stress, SIRT7 is released from nucleoli leading to hyperacetylation of POLR1E/PAF53 and decreased RNA polymerase I transcription. Required to restore the transcription of ribosomal RNA (rRNA) at the exit from mitosis. Promotes pre-ribosomal RNA (pre-rRNA) cleavage at the 5'-terminal processing site by mediating deacetylation of RRP9/U3-55K, a core subunit of the U3 snoRNP complex. Mediates 'Lys-37' deacetylation of Ran, thereby regulating the nuclear export of NF-kappa-B subunit RELA/p65. Acts as a regulator of DNA damage repair by mediating deacetylation of ATM during the late stages of DNA damage response, promoting ATM dephosphorylation and deactivation. May also deacetylate p53/TP53 and promotes cell survival, however such data need additional confirmation. Suppresses the activity of the DCX (DDB1-CUL4-X-box) E3 ubiquitin-protein ligase complexes by mediating deacetylation of DDB1, which prevents the interaction between DDB1 and CUL4 (CUL4A or CUL4B). Activates RNA polymerase II transcription by mediating deacetylation of CDK9, thereby promoting 'Ser-2' phosphorylation of the C-terminal domain (CTD) of RNA polymerase II. Deacetylates FBL, promoting histone-glutamine methyltransferase activity of FBL. Acts as a regulator of mitochondrial function by catalyzing deacetylation of GABPB1. Regulates Akt/AKT1 activity by mediating deacetylation of FKBP5/FKBP51. Required to prevent R-loop-associated DNA damage and transcription-associated genomic instability by mediating deacetylation and subsequent activation of DDX21, thereby overcoming R-loop-mediated stalling of RNA polymerases. In addition to protein deacetylase activity, also acts as protein-lysine deacylase. Acts as a protein depropionylase by mediating depropionylation of Osterix (SP7), thereby regulating bone formation by osteoblasts. Acts as a histone deglutarylase by mediating deglutarylation of histone H4 on 'Lys-91' (H4K91glu); a mark that destabilizes nucleosomes by promoting dissociation of the H2A-H2B dimers from nucleosomes. Acts as a histone desuccinylase: in response to DNA damage, recruited to DNA double-strand breaks (DSBs) and catalyzes desuccinylation of histone H3 on 'Lys-122' (H3K122succ), thereby promoting chromatin condensation and DSB repair. Also promotes DSB repair by promoting H3K18Ac deacetylation, regulating non-homologous end joining (NHEJ). Along with its role in DNA repair, required for chromosome synapsis during prophase I of female meiosis by catalyzing H3K18Ac deacetylation. Involved in transcriptional repression of LINE-1 retrotransposon via H3K18Ac deacetylation, and promotes their association with the nuclear lamina. Required to stabilize ribosomal DNA (rDNA) heterochromatin and prevent cellular senescence induced by rDNA instability. Acts as a negative regulator of SIRT1 by preventing autodeacetylation of SIRT1, restricting SIRT1 deacetylase activity. This Mus musculus (Mouse) protein is NAD-dependent protein deacetylase sirtuin-7.